Reading from the N-terminus, the 505-residue chain is Trans-cinnamate 4-monooxygenase (505 aa).

The chain crosses the membrane as a helical span at residues 3–23; that stretch reads LLLLEKTLLGSFVAILVAILV. Residues 213 to 218 and alanine 306 each bind (E)-cinnamate; that span reads RSRLAQ. Position 447 (cysteine 447) interacts with heme.

It belongs to the cytochrome P450 family. The cofactor is heme.

It is found in the membrane. It carries out the reaction (E)-cinnamate + reduced [NADPH--hemoprotein reductase] + O2 = (E)-4-coumarate + oxidized [NADPH--hemoprotein reductase] + H2O + H(+). It functions in the pathway phenylpropanoid metabolism; trans-4-coumarate biosynthesis; trans-4-coumarate from trans-cinnamate: step 1/1. In terms of biological role, catalyzes the first oxidative step of the phenylpropanoid pathway in higher plants by transforming trans-cinnamate into p-coumarate. The compounds formed by this pathway are essential components for lignification, pollination, and defense against ultraviolet light, predators and pathogens. The sequence is that of Trans-cinnamate 4-monooxygenase (CYP73A13) from Populus tremuloides (Quaking aspen).